A 345-amino-acid chain; its full sequence is Uroporphyrinogen decarboxylase (345 aa).

Substrate is bound by residues 30-34 (RQAGR), Asp79, Tyr154, Ser209, and His322.

It belongs to the uroporphyrinogen decarboxylase family. As to quaternary structure, homodimer.

It localises to the cytoplasm. It catalyses the reaction uroporphyrinogen III + 4 H(+) = coproporphyrinogen III + 4 CO2. It functions in the pathway porphyrin-containing compound metabolism; protoporphyrin-IX biosynthesis; coproporphyrinogen-III from 5-aminolevulinate: step 4/4. Catalyzes the decarboxylation of four acetate groups of uroporphyrinogen-III to yield coproporphyrinogen-III. The protein is Uroporphyrinogen decarboxylase of Nocardioides sp. (strain ATCC BAA-499 / JS614).